The primary structure comprises 123 residues: Polyadenylate-binding protein-interacting protein 2B (123 aa).

Methionine 1 is modified (N-acetylmethionine). Residues 1-13 show a composition bias toward polar residues; that stretch reads MNGSNMANTSPSV. Disordered stretches follow at residues 1 to 30 and 91 to 123; these read MNGS…KENP and NGLS…GEKY. Basic and acidic residues-rich tracts occupy residues 14–30 and 113–123; these read KSKE…KENP and DAKEFIPGEKY.

The protein belongs to the PAIP2 family. Interacts (via central acidic portion and C-terminus) with PABPC1 (via the second and third RRM domains and the C-terminus). Ubiquitinated in vitro. As to expression, expressed in brain, cervix, heart, liver, ovary, kidney, prostate and testis.

Functionally, inhibits translation of capped and polyadenylated mRNAs by displacing PABPC1 from the poly(A) tail. This chain is Polyadenylate-binding protein-interacting protein 2B (PAIP2B), found in Homo sapiens (Human).